Consider the following 308-residue polypeptide: uncharacterized protein (308 aa).

This is an uncharacterized protein from Acanthamoeba polyphaga (Amoeba).